We begin with the raw amino-acid sequence, 457 residues long: Charged multivesicular body protein 7 (457 aa).

Coiled-coil stretches lie at residues 234-266 (QLQC…LLKE) and 331-382 (TVER…EKSV). Disordered stretches follow at residues 381 to 401 (SVPE…PPRK) and 435 to 457 (LTVS…EPAQ).

This sequence belongs to the SNF7 family.

The protein localises to the cytoplasm. Its subcellular location is the nucleus envelope. Its function is as follows. ESCRT-III-like protein required to recruit the ESCRT-III complex to the nuclear envelope during late anaphase. Together with SPAST, the ESCRT-III complex promotes nuclear envelope sealing and mitotic spindle disassembly during late anaphase. Plays a role in the endosomal sorting pathway. This Danio rerio (Zebrafish) protein is Charged multivesicular body protein 7 (chmp7).